Reading from the N-terminus, the 37-residue chain is Large ribosomal subunit protein bL36 (37 aa).

The protein belongs to the bacterial ribosomal protein bL36 family.

In Geobacillus kaustophilus (strain HTA426), this protein is Large ribosomal subunit protein bL36.